The chain runs to 363 residues: MQLLQSSVIAATVGAALVAAVPVELKARDSCTFTSAADAKSGKTSCSTITLSNIEVPAGETLDLTGLNDGTTVIFSGETTFGYKEWEGPLISVSGTNIKVQQASGAKIDGDGSRWWDGKGGNGGKTKPKFFYAHKLDSSSITGLQIYNTPVQGFSIQSDNLNITDVTIDNSAGTAEGHNTDAFDVGSSTYINIDGATVYNQDDCLAINSGSHITFTNGYCDGGHGLSIGSVGGRSDNTVEDVTISNSKVVNSQNGVRIKTVYDATGTVSNVKFEDITLSGITKYGLIVEQDYENGSPTGTPTNGIKVSDITFDKVTGTVESDATDIYILCGSGSCTDWTWSGVSITGGKTSSKCENVSTGASC.

An N-terminal signal peptide occupies residues 1-20 (MQLLQSSVIAATVGAALVAA). Residues 21–28 (VPVELKAR) constitute a propeptide that is removed on maturation. A disulfide bridge links Cys31 with Cys46. PbH1 repeat units follow at residues 158–187 (SDNL…DVGS), 188–209 (STYI…AINS), 210–230 (GSHI…SIGS), 239–260 (VEDV…RIKT), 268–290 (VSNV…IVEQ), and 302–347 (TNGI…SITG). Residue Asn162 is glycosylated (N-linked (GlcNAc...) asparagine). Catalysis depends on Asp202, which acts as the Proton donor. An intrachain disulfide couples Cys204 to Cys220. His224 is a catalytic residue. 2 disulfides stabilise this stretch: Cys330–Cys335 and Cys354–Cys363. The N-linked (GlcNAc...) asparagine glycan is linked to Asn356.

The protein belongs to the glycosyl hydrolase 28 family.

It localises to the secreted. The enzyme catalyses (1,4-alpha-D-galacturonosyl)n+m + H2O = (1,4-alpha-D-galacturonosyl)n + (1,4-alpha-D-galacturonosyl)m.. Its function is as follows. Involved in maceration and soft-rotting of plant tissue. Hydrolyzes the 1,4-alpha glycosidic bonds of de-esterified pectate in the smooth region of the plant cell wall. The protein is Endopolygalacturonase B (pgaB) of Aspergillus oryzae (strain ATCC 42149 / RIB 40) (Yellow koji mold).